Reading from the N-terminus, the 666-residue chain is Heparin-sulfate lyase (666 aa).

The first 22 residues, 1–22 (MNKTFKYIVLLALACFVGKANA), serve as a signal peptide directing secretion. Catalysis depends on Y301, which acts as the Proton acceptor.

Belongs to the polysaccharide lyase 12 family.

It localises to the periplasm. It catalyses the reaction Elimination of sulfate, appears to act on linkages between N-acetyl-D-glucosamine and uronate. Product is an unsaturated sugar.. In terms of biological role, specifically cleaves heparan sulfate-rich regions of acidic polysaccharides. Also able to degrade heparin and hyaluronic acid. Does not act on N,O-desulfated glucosamine or N-acetyl-O-sulfated glucosamine linkages. Functions in cleaving metazoan heparan sulfate and providing carbon, nitrogen and sulfate sources for microorganisms. The chain is Heparin-sulfate lyase (hepC) from Bacteroides stercoris.